Here is a 348-residue protein sequence, read N- to C-terminus: Putative [LysW]-L-2-aminoadipate/[LysW]-L-glutamate phosphate reductase (348 aa).

9–12 lines the NADP(+) pocket; that stretch reads SGYV. The active site involves Cys-149. Asn-315 contacts NADP(+).

This sequence belongs to the NAGSA dehydrogenase family. Type 1 subfamily. LysY sub-subfamily.

It is found in the cytoplasm. The enzyme catalyses [amino-group carrier protein]-C-terminal-N-(1-carboxy-5-oxopentan-1-yl)-L-glutamine + phosphate + NADP(+) = [amino-group carrier protein]-C-terminal-N-(1-carboxy-5-phosphooxy-5-oxopentan-1-yl)-L-glutamine + NADPH + H(+). It carries out the reaction [amino-group carrier protein]-C-terminal-gamma-(L-glutamyl-5-semialdehyde)-L-glutamate + phosphate + NADP(+) = [amino-group carrier protein]-C-terminal-gamma-(5-phospho-L-glutamyl)-L-glutamate + NADPH + H(+). Its pathway is amino-acid biosynthesis; L-lysine biosynthesis via AAA pathway; L-lysine from L-alpha-aminoadipate (Thermus route): step 3/5. It functions in the pathway amino-acid biosynthesis; L-arginine biosynthesis. Functionally, involved in both the arginine and lysine biosynthetic pathways. The sequence is that of Putative [LysW]-L-2-aminoadipate/[LysW]-L-glutamate phosphate reductase from Nitrosopumilus maritimus (strain SCM1).